The primary structure comprises 364 residues: Histidinol-phosphate aminotransferase (364 aa).

K222 carries the N6-(pyridoxal phosphate)lysine modification.

This sequence belongs to the class-II pyridoxal-phosphate-dependent aminotransferase family. Histidinol-phosphate aminotransferase subfamily. As to quaternary structure, homodimer. It depends on pyridoxal 5'-phosphate as a cofactor.

It catalyses the reaction L-histidinol phosphate + 2-oxoglutarate = 3-(imidazol-4-yl)-2-oxopropyl phosphate + L-glutamate. The protein operates within amino-acid biosynthesis; L-histidine biosynthesis; L-histidine from 5-phospho-alpha-D-ribose 1-diphosphate: step 7/9. The sequence is that of Histidinol-phosphate aminotransferase from Brevibacillus brevis (strain 47 / JCM 6285 / NBRC 100599).